A 235-amino-acid chain; its full sequence is MVLIPAIDIMEEKCVRLTKGDFNTKEVYYENPVDVAKMWEELGAKRIHVVDLDGAKQGHLVNGNIIEQIIKSCKAEIEVGGGIRNRETIDYLFSVGVKYVILGSAAIYDKDLLLYSLSNYGERTIVGIDSKNGEVAVSGWLEKTKIKDMELAKKMKEIGVKTIIFTDISKDGTLNGPNFKALENILKTGVQVIASGGISSIEDLKKLKEMGAYGAIIGKALYIGKINFKSALEVI.

Aspartate 8 serves as the catalytic Proton acceptor. The Proton donor role is filled by aspartate 129.

The protein belongs to the HisA/HisF family.

The protein resides in the cytoplasm. It carries out the reaction 1-(5-phospho-beta-D-ribosyl)-5-[(5-phospho-beta-D-ribosylamino)methylideneamino]imidazole-4-carboxamide = 5-[(5-phospho-1-deoxy-D-ribulos-1-ylimino)methylamino]-1-(5-phospho-beta-D-ribosyl)imidazole-4-carboxamide. It participates in amino-acid biosynthesis; L-histidine biosynthesis; L-histidine from 5-phospho-alpha-D-ribose 1-diphosphate: step 4/9. This Thermoanaerobacter sp. (strain X514) protein is 1-(5-phosphoribosyl)-5-[(5-phosphoribosylamino)methylideneamino] imidazole-4-carboxamide isomerase.